Consider the following 178-residue polypeptide: ATP synthase subunit delta (178 aa).

The protein belongs to the ATPase delta chain family. F-type ATPases have 2 components, F(1) - the catalytic core - and F(0) - the membrane proton channel. F(1) has five subunits: alpha(3), beta(3), gamma(1), delta(1), epsilon(1). F(0) has three main subunits: a(1), b(2) and c(10-14). The alpha and beta chains form an alternating ring which encloses part of the gamma chain. F(1) is attached to F(0) by a central stalk formed by the gamma and epsilon chains, while a peripheral stalk is formed by the delta and b chains.

It localises to the cell inner membrane. Its function is as follows. F(1)F(0) ATP synthase produces ATP from ADP in the presence of a proton or sodium gradient. F-type ATPases consist of two structural domains, F(1) containing the extramembraneous catalytic core and F(0) containing the membrane proton channel, linked together by a central stalk and a peripheral stalk. During catalysis, ATP synthesis in the catalytic domain of F(1) is coupled via a rotary mechanism of the central stalk subunits to proton translocation. This protein is part of the stalk that links CF(0) to CF(1). It either transmits conformational changes from CF(0) to CF(1) or is implicated in proton conduction. This is ATP synthase subunit delta from Laribacter hongkongensis (strain HLHK9).